The primary structure comprises 355 residues: Ion-translocating oxidoreductase complex subunit D (355 aa).

5 helical membrane passes run 13 to 33 (GKLT…ALAV), 35 to 55 (VYYF…LALI), 77 to 97 (VILT…YWVI), 98 to 118 (LIGT…LGQN), and 128 to 148 (VVLL…ISLL). The residue at position 186 (threonine 186) is an FMN phosphoryl threonine. Helical transmembrane passes span 216-236 (AGLG…FLIW), 245-265 (PVAI…FGNA), 267-287 (AVGF…FFIA), 294-314 (PVTP…ICLI), and 318-338 (GNYP…VPLI).

It belongs to the NqrB/RnfD family. As to quaternary structure, the complex is composed of six subunits: RnfA, RnfB, RnfC, RnfD, RnfE and RnfG. Requires FMN as cofactor.

The protein localises to the cell inner membrane. In terms of biological role, part of a membrane-bound complex that couples electron transfer with translocation of ions across the membrane. This chain is Ion-translocating oxidoreductase complex subunit D, found in Actinobacillus succinogenes (strain ATCC 55618 / DSM 22257 / CCUG 43843 / 130Z).